A 44-amino-acid polypeptide reads, in one-letter code: Photosystem I reaction center subunit IX (44 aa).

Residues 7–27 form a helical membrane-spanning segment; that stretch reads YLSTVPVLTTLWFGSLAGLLI.

The protein belongs to the PsaJ family.

It localises to the plastid. It is found in the chloroplast thylakoid membrane. May help in the organization of the PsaE and PsaF subunits. The protein is Photosystem I reaction center subunit IX of Dioscorea elephantipes (Elephant's foot yam).